The chain runs to 114 residues: MSGDPSEEELEELRKKKMEQLKEQQGGEGEGQEAAQQQAEAQKQAVLKQNLTDGARKRLNTVKMSKPQVGEQIEQQVVALARSGRVQGQIDEDQMKELLSELTPDSKSFDIKRR.

Acidic residues predominate over residues 1 to 11 (MSGDPSEEELE). A disordered region spans residues 1 to 45 (MSGDPSEEELEELRKKKMEQLKEQQGGEGEGQEAAQQQAEAQKQA). The segment covering 12–22 (ELRKKKMEQLK) has biased composition (basic and acidic residues). Over residues 32–45 (QEAAQQQAEAQKQA) the composition is skewed to low complexity.

Belongs to the PDCD5 family.

This is DNA-binding protein rrnAC3180 from Haloarcula marismortui (strain ATCC 43049 / DSM 3752 / JCM 8966 / VKM B-1809) (Halobacterium marismortui).